The primary structure comprises 345 residues: Proto-oncogene serine/threonine-protein kinase mos (345 aa).

In terms of domain architecture, Protein kinase spans 63 to 344; that stretch reads VCLLQRLGAG…LDLRALQAEL (282 aa). ATP contacts are provided by residues 69-77 and Lys90; that span reads LGAGGFGSV. Residue Asp202 is the Proton acceptor of the active site.

Belongs to the protein kinase superfamily. Ser/Thr protein kinase family. As to quaternary structure, interacts with MAP2K1/MEK1. As to expression, restricted to gonadal tissues.

It localises to the cytoplasm. It carries out the reaction L-seryl-[protein] + ATP = O-phospho-L-seryl-[protein] + ADP + H(+). It catalyses the reaction L-threonyl-[protein] + ATP = O-phospho-L-threonyl-[protein] + ADP + H(+). Serine/threonine kinase involved in the regulation of MAPK signaling. Is an activator of the ERK1/2 signaling cascade playing an essential role in the stimulation of oocyte maturation. In Sus scrofa (Pig), this protein is Proto-oncogene serine/threonine-protein kinase mos.